Here is a 109-residue protein sequence, read N- to C-terminus: Phosphoribosyl-ATP pyrophosphatase (109 aa).

The protein belongs to the PRA-PH family.

It is found in the cytoplasm. The enzyme catalyses 1-(5-phospho-beta-D-ribosyl)-ATP + H2O = 1-(5-phospho-beta-D-ribosyl)-5'-AMP + diphosphate + H(+). The protein operates within amino-acid biosynthesis; L-histidine biosynthesis; L-histidine from 5-phospho-alpha-D-ribose 1-diphosphate: step 2/9. The chain is Phosphoribosyl-ATP pyrophosphatase from Paramagnetospirillum magneticum (strain ATCC 700264 / AMB-1) (Magnetospirillum magneticum).